The sequence spans 488 residues: MRISVGALLGLTALSHATTEKRAASASAYCSNSAGNYKLSSIAAPVQGAGNPGSESTWQLTVDDTSSGHKQTIVGFGAAVTDATVTSFNTLSASVLQDLLNKLMTPAGANFALMRHTIGASDLSGDPAYTYDDNGGKADPSLSGFNLGDRGTAMAKMLATMKSLQPNLKILGSPWSAPGWMKLNGVLDGNTNNNNLNDGYLTSGGTGSTGYASQFAQYFVKYIQAYKNLGAHVDAITIQNEPLFSSAGYPTMYVYDYESAQLIQNYIGPALASAGLDTEIWAYDHNTDVPSYPQTVLNQAGQYVKSVAWHCYAPNVDWTVLSQFHNTNPGVKQYMTECWTPASGAWHQAADFTMGPLQNWASGVAAWTLGTNAQDGPHLSTGGCATCQGLVTINNGGYTLNTAYYMMAQFSKFMPPGAIVLNGSGSYTYSGGGGIQSVASLNPDGTRTVVIENTFGNDVYVTVTMKSGQKWSGNAPSQSVTTWVLPSA.

An N-terminal signal peptide occupies residues Met-1 to Ala-17. The active-site Proton donor is the Glu-241. The active-site Nucleophile is Glu-337. The N-linked (GlcNAc...) asparagine glycan is linked to Asn-422.

The protein belongs to the glycosyl hydrolase 30 family.

It is found in the secreted. The enzyme catalyses Random hydrolysis of (1-&gt;6)-linkages in (1-&gt;6)-beta-D-glucans.. Endoglucanase that has highest activity on the linear beta-1,6-glucan pustulan and lower activity against laminarin (beta-1,3-glucans with beta-1,6-branches). Is active on C.albicans cell walls allowing the release of a previously described cell wall proteins. This chain is Endo-1,6-beta-D-glucanase neg1, found in Aspergillus fumigatus (strain ATCC MYA-4609 / CBS 101355 / FGSC A1100 / Af293) (Neosartorya fumigata).